Here is a 499-residue protein sequence, read N- to C-terminus: Probable alpha-L-arabinofuranosidase B (499 aa).

The signal sequence occupies residues 1 to 18 (MFSRRNLVALGLAATVSA). Positions 19–335 (GPCDIYEAGD…ENIVAAKYVS (317 aa)) are catalytic. 3 cysteine pairs are disulfide-bonded: C21-C31, C81-C86, and C176-C177. N-linked (GlcNAc...) asparagine glycosylation is present at N83. A glycan (N-linked (GlcNAc...) asparagine) is linked at N202. Residue D219 participates in substrate binding. E221 functions as the Nucleophile in the catalytic mechanism. Substrate is bound by residues N222, N223, and G296. The Proton donor role is filled by D297. The segment at 336–499 (GSLVSGPSFT…SFEIETAFAS (164 aa)) is ABD. Residues C401 and C439 are joined by a disulfide bond. Substrate contacts are provided by H416, N418, F419, D435, H463, D465, L468, and D488.

This sequence belongs to the glycosyl hydrolase 54 family.

The protein resides in the secreted. The catalysed reaction is Hydrolysis of terminal non-reducing alpha-L-arabinofuranoside residues in alpha-L-arabinosides.. It functions in the pathway glycan metabolism; L-arabinan degradation. In terms of biological role, alpha-L-arabinofuranosidase involved in the degradation of arabinoxylan, a major component of plant hemicellulose. Able to hydrolyze 1,5-, 1,3- and 1,2-alpha-linkages not only in L-arabinofuranosyl oligosaccharides, but also in polysaccharides containing terminal non-reducing L-arabinofuranoses in side chains, like L-arabinan, arabinogalactan and arabinoxylan. The protein is Probable alpha-L-arabinofuranosidase B (abfB) of Aspergillus niger (strain ATCC MYA-4892 / CBS 513.88 / FGSC A1513).